We begin with the raw amino-acid sequence, 249 residues long: uncharacterized protein (249 aa).

Residue 11–34 (IFGGRSQIGGELARRLAAGATMVL) coordinates NADP(+). Residue Ser142 participates in substrate binding. Tyr155 serves as the catalytic Proton acceptor.

This sequence belongs to the short-chain dehydrogenases/reductases (SDR) family.

This is an uncharacterized protein from Mycobacterium tuberculosis (strain CDC 1551 / Oshkosh).